Consider the following 325-residue polypeptide: Alpha-cuprenene synthase COP6 (325 aa).

D102, E166, N224, S228, and E232 together coordinate Mg(2+).

The protein belongs to the trichodiene synthase family. It depends on Mg(2+) as a cofactor.

In terms of biological role, alpha-cuprenene synthase; part of the gene cluster that mediates the biosynthesis of alpha-cuprenene and oxidized derivatives. The alpha-cuprenene synthase COP6 is the only sesquiterpene synthase identified in C.cinereus that appears to be part of a biosynthetic gene cluster and is highly specific since it catalyzes the cyclization of (2E,6E)-farnesyl diphosphate into only one product, alpha-cuprenene. COP6 is also able to perform the cyclization of geranyl diphosphate. The cytochrome P450 monooxygenase COX2 then oxidizes the cyclohexadiene ring of alpha-cuprenene at positions 1 and 4, yielding first alpha-cuparene, followed by alpha-cuparophenol and a further yet unidentified compound resulting from one additional oxidation step. The cytochrome P450 monooxygenase COX1 then likely catalyzes the oxidation at position 9 of the pentane ring of alpha-cuprenene to give the corresponding hydroxy or ketone derivatives. In Coprinopsis cinerea (strain Okayama-7 / 130 / ATCC MYA-4618 / FGSC 9003) (Inky cap fungus), this protein is Alpha-cuprenene synthase COP6.